Reading from the N-terminus, the 729-residue chain is Receptor-like protein 2 (729 aa).

A signal peptide spans 1 to 44; it reads MRSKAKGLVRPLITKPVQPLSSHMHLFLLCILFLSALFLTLSEA. Residues 45–82 form an N-cap region; the sequence is VCNLQDRESLIWFSGNVSSSVSPLNWNLSIDCCSWEGI. The Extracellular portion of the chain corresponds to 45–707; sequence VCNLQDRESL…AKENDELNRT (663 aa). N-linked (GlcNAc...) asparagine glycans are attached at residues Asn60 and Asn71. LRR repeat units lie at residues 89-113, 114-137, 139-163, 168-193, 195-219, 220-244, 245-268, 269-292, 293-316, 317-340, 342-364, 365-389, 391-413, 414-437, 439-464, 468-492, 493-515, 516-540, 542-560, and 561-584; these read DSHV…VQNI, HRLS…FFST, DQLM…AFGN, FFSI…VYLQ, TINL…MCRS, SPQL…LGRC, LRLT…IYNL, SELE…ITRL, RKLT…IGNL, SSLR…LANC, KLVK…EFSQ, LQSL…IFSC, SLTA…VLEL, ESLS…SILQ, CRKL…DFLS, FPKL…LINL, NKVE…WLGT, LPDL…LFQL, ALMS…PIFL, and NPNN…IYIR. 2 N-linked (GlcNAc...) asparagine glycosylation sites follow: Asn145 and Asn163. 2 N-linked (GlcNAc...) asparagine glycosylation sites follow: Asn202 and Asn205. N-linked (GlcNAc...) asparagine glycosylation is found at Asn256, Asn267, Asn288, Asn315, Asn330, and Asn339. Asn375 is a glycosylation site (N-linked (GlcNAc...) asparagine). N-linked (GlcNAc...) asparagine glycosylation is present at Asn428. Residues Asn564, Asn587, Asn611, Asn622, Asn635, Asn657, and Asn705 are each glycosylated (N-linked (GlcNAc...) asparagine). LRR repeat units lie at residues 599-623, 624-647, and 649-672; these read LKVL…LSNL, TNLE…LTNL, and FLSY…QFDT. Residues 690–707 are C-cap/acidic domain; it reads LTSCKPTRAKENDELNRT. The helical transmembrane segment at 708-728 threads the bilayer; the sequence is FLMGIAIGYFLSFVSILVVRA. Trp729 is a topological domain (cytoplasmic).

Belongs to the RLP family.

It localises to the cell membrane. Involved in the perception of CLV3 and CLV3-like peptides, that act as extracellular signals regulating meristems maintenance. This is Receptor-like protein 2 from Arabidopsis thaliana (Mouse-ear cress).